Reading from the N-terminus, the 366-residue chain is Galactoside alpha-(1,2)-fucosyltransferase 1 (366 aa).

Residues 1–8 are Cytoplasmic-facing; that stretch reads MWPLSHRH. The chain crosses the membrane as a helical; Signal-anchor for type II membrane protein span at residues 9–25; it reads LCLAFLLVCVLSAISFF. Residues 26-366 lie on the Lumenal side of the membrane; it reads LHIHQDSFRH…LSPLWTLAEP (341 aa). Residues asparagine 66, asparagine 302, and asparagine 328 are each glycosylated (N-linked (GlcNAc...) asparagine).

Belongs to the glycosyltransferase 11 family.

Its subcellular location is the golgi apparatus. The protein localises to the golgi stack membrane. It catalyses the reaction a beta-D-galactosyl-(1-&gt;4)-N-acetyl-beta-D-glucosaminyl derivative + GDP-beta-L-fucose = an alpha-L-Fuc-(1-&gt;2)-beta-D-Gal-(1-&gt;4)-beta-D-GlcNAc derivative + GDP + H(+). It carries out the reaction a ganglioside GA1 + GDP-beta-L-fucose = a ganglioside Fuc-GA1 + GDP + H(+). The enzyme catalyses a beta-D-Gal-(1-&gt;3)-beta-D-GlcNAc-(1-&gt;3)-beta-D-Gal-(1-&gt;4)-beta-D-Glc-(1&lt;-&gt;1')-Cer(d18:1(4E)) + GDP-beta-L-fucose = alpha-L-fucosyl-(1-&gt;2)- beta-D-galactosyl-(1-&gt;3)-N-acetyl-beta-D-glucosaminyl-(1-&gt;3)-beta-D-galactosyl-(1-&gt;4)-beta-D-glucosyl-(1&lt;-&gt;1')-N-acylsphing-4-enine + GDP + H(+). The catalysed reaction is a neolactoside nLc4Cer(d18:1(4E)) + GDP-beta-L-fucose = a neolactoside IV(2)-alpha-Fuc-nLc4Cer(d18:1(4E)) + GDP + H(+). It catalyses the reaction a ganglioside GM1 + GDP-beta-L-fucose = a ganglioside Fuc-GM1 + GDP + H(+). It carries out the reaction beta-D-galactosyl-(1-&gt;3)-N-acetyl-D-galactosamine + GDP-beta-L-fucose = alpha-L-fucosyl-(1-&gt;2)-beta-D-galactosyl-(1-&gt;3)-N-acetyl-D-galactosamine + GDP + H(+). It functions in the pathway protein modification; protein glycosylation. Its function is as follows. Catalyzes the transfer of L-fucose, from a guanosine diphosphate-beta-L-fucose, to the terminal galactose residue of glycoconjugates through an alpha(1,2) linkage leading to H antigen synthesis that is an intermediate substrate in the synthesis of ABO blood group antigens. H antigen is essential for maturation of the glomerular layer of the main olfactory bulb, in cell migration and early cell-cell contacts during tumor associated angiogenesis. Preferentially fucosylates soluble lactose and to a lesser extent fucosylates glycolipids gangliosides GA1 and GM1a. This chain is Galactoside alpha-(1,2)-fucosyltransferase 1, found in Plecturocebus brunneus (Brown titi monkey).